The primary structure comprises 565 residues: Urocanate hydratase (565 aa).

NAD(+)-binding positions include 58–59 (GG), Gln-136, 182–184 (GMG), Glu-202, Arg-207, 245–246 (NA), 266–270 (QTSAH), 276–277 (YL), and Tyr-325. Cys-413 is an active-site residue. Gly-495 contributes to the NAD(+) binding site.

The protein belongs to the urocanase family. NAD(+) serves as cofactor.

The protein resides in the cytoplasm. It catalyses the reaction 4-imidazolone-5-propanoate = trans-urocanate + H2O. It functions in the pathway amino-acid degradation; L-histidine degradation into L-glutamate; N-formimidoyl-L-glutamate from L-histidine: step 2/3. Functionally, catalyzes the conversion of urocanate to 4-imidazolone-5-propionate. The protein is Urocanate hydratase of Vibrio vulnificus (strain YJ016).